Here is a 290-residue protein sequence, read N- to C-terminus: Small ribosomal subunit biogenesis GTPase RsgA (290 aa).

The region spanning 62–219 (DNYLIRPQVA…VVDTPGFSTL (158 aa)) is the CP-type G domain. GTP contacts are provided by residues 111 to 114 (NKID) and 162 to 170 (GPSGVGKST). Zn(2+)-binding residues include Cys-243, Cys-248, His-250, and Cys-256.

It belongs to the TRAFAC class YlqF/YawG GTPase family. RsgA subfamily. As to quaternary structure, monomer. Associates with 30S ribosomal subunit, binds 16S rRNA. Zn(2+) is required as a cofactor.

It is found in the cytoplasm. One of several proteins that assist in the late maturation steps of the functional core of the 30S ribosomal subunit. Helps release RbfA from mature subunits. May play a role in the assembly of ribosomal proteins into the subunit. Circularly permuted GTPase that catalyzes slow GTP hydrolysis, GTPase activity is stimulated by the 30S ribosomal subunit. This Clostridium novyi (strain NT) protein is Small ribosomal subunit biogenesis GTPase RsgA.